A 377-amino-acid polypeptide reads, in one-letter code: Dehydrogenase/reductase SDR family member 13 (377 aa).

The first 25 residues, 1-25, serve as a signal peptide directing secretion; that stretch reads MEALLLGVGLLLGAYVLVYYNLVKA. Residues Ser-46 and Ile-48 each contribute to the NAD(+) site. A substrate-binding site is contributed by Ser-170. Residues Tyr-197, Lys-201, and Ser-232 each contribute to the NAD(+) site. Tyr-197 (proton acceptor) is an active-site residue. A disordered region spans residues 310-363; it reads LAGLGPGEDAESDEDSQPEDPGTPSSPSSPHPEEPTVSELYPSPQSSTDRSTVT. Positions 317–327 are enriched in acidic residues; that stretch reads EDAESDEDSQP. Positions 328–337 are enriched in low complexity; that stretch reads EDPGTPSSPS. Positions 352-363 are enriched in polar residues; the sequence is SPQSSTDRSTVT.

This sequence belongs to the short-chain dehydrogenases/reductases (SDR) family.

The protein resides in the secreted. Functionally, putative oxidoreductase. This Bos taurus (Bovine) protein is Dehydrogenase/reductase SDR family member 13 (DHRS13).